The chain runs to 254 residues: 5'-nucleotidase SurE (254 aa).

Residues aspartate 8, aspartate 9, serine 40, and asparagine 93 each coordinate a divalent metal cation.

It belongs to the SurE nucleotidase family. A divalent metal cation serves as cofactor.

The protein localises to the cytoplasm. It carries out the reaction a ribonucleoside 5'-phosphate + H2O = a ribonucleoside + phosphate. Its function is as follows. Nucleotidase that shows phosphatase activity on nucleoside 5'-monophosphates. This is 5'-nucleotidase SurE from Methylorubrum populi (strain ATCC BAA-705 / NCIMB 13946 / BJ001) (Methylobacterium populi).